The primary structure comprises 110 residues: Acylphosphatase (110 aa).

The Acylphosphatase-like domain occupies 21–108 (TRRYLVTGRV…TNLKSFRIEG (88 aa)). Residues Arg-36 and Asn-54 contribute to the active site.

It belongs to the acylphosphatase family.

The enzyme catalyses an acyl phosphate + H2O = a carboxylate + phosphate + H(+). The sequence is that of Acylphosphatase (acyP) from Koribacter versatilis (strain Ellin345).